A 445-amino-acid chain; its full sequence is tRNA modification GTPase MnmE (445 aa).

The (6S)-5-formyl-5,6,7,8-tetrahydrofolate site is built by arginine 20, glutamate 79, and lysine 119. Residues 215 to 371 form the TrmE-type G domain; it reads GLKLAIIGPP…ILKNIEEIAE (157 aa). Asparagine 225 serves as a coordination point for K(+). GTP is bound by residues 225-230, 244-250, and 269-272; these read NAGKSS, SNIAGTT, and DTAG. Serine 229 contributes to the Mg(2+) binding site. K(+)-binding residues include serine 244, isoleucine 246, and threonine 249. Threonine 250 provides a ligand contact to Mg(2+). Lysine 445 serves as a coordination point for (6S)-5-formyl-5,6,7,8-tetrahydrofolate.

It belongs to the TRAFAC class TrmE-Era-EngA-EngB-Septin-like GTPase superfamily. TrmE GTPase family. In terms of assembly, homodimer. Heterotetramer of two MnmE and two MnmG subunits. The cofactor is K(+).

It localises to the cytoplasm. Its function is as follows. Exhibits a very high intrinsic GTPase hydrolysis rate. Involved in the addition of a carboxymethylaminomethyl (cmnm) group at the wobble position (U34) of certain tRNAs, forming tRNA-cmnm(5)s(2)U34. The sequence is that of tRNA modification GTPase MnmE from Rickettsia bellii (strain OSU 85-389).